The chain runs to 205 residues: N-(5'-phosphoribosyl)anthranilate isomerase (205 aa).

The protein belongs to the TrpF family.

The catalysed reaction is N-(5-phospho-beta-D-ribosyl)anthranilate = 1-(2-carboxyphenylamino)-1-deoxy-D-ribulose 5-phosphate. The protein operates within amino-acid biosynthesis; L-tryptophan biosynthesis; L-tryptophan from chorismate: step 3/5. This chain is N-(5'-phosphoribosyl)anthranilate isomerase, found in Phocaeicola vulgatus (strain ATCC 8482 / DSM 1447 / JCM 5826 / CCUG 4940 / NBRC 14291 / NCTC 11154) (Bacteroides vulgatus).